The following is a 384-amino-acid chain: Dual-specificity RNA methyltransferase RlmN (384 aa).

The Proton acceptor role is filled by E105. A Radical SAM core domain is found at 111-350 (EDDRATLCVS…TIVRKTRGDD (240 aa)). A disulfide bridge links C118 with C355. [4Fe-4S] cluster-binding residues include C125, C129, and C132. Residues 179-180 (GE), S211, 233-235 (SLH), and N312 each bind S-adenosyl-L-methionine. The active-site S-methylcysteine intermediate is the C355.

It belongs to the radical SAM superfamily. RlmN family. [4Fe-4S] cluster is required as a cofactor.

Its subcellular location is the cytoplasm. It carries out the reaction adenosine(2503) in 23S rRNA + 2 reduced [2Fe-2S]-[ferredoxin] + 2 S-adenosyl-L-methionine = 2-methyladenosine(2503) in 23S rRNA + 5'-deoxyadenosine + L-methionine + 2 oxidized [2Fe-2S]-[ferredoxin] + S-adenosyl-L-homocysteine. The enzyme catalyses adenosine(37) in tRNA + 2 reduced [2Fe-2S]-[ferredoxin] + 2 S-adenosyl-L-methionine = 2-methyladenosine(37) in tRNA + 5'-deoxyadenosine + L-methionine + 2 oxidized [2Fe-2S]-[ferredoxin] + S-adenosyl-L-homocysteine. Specifically methylates position 2 of adenine 2503 in 23S rRNA and position 2 of adenine 37 in tRNAs. m2A2503 modification seems to play a crucial role in the proofreading step occurring at the peptidyl transferase center and thus would serve to optimize ribosomal fidelity. The sequence is that of Dual-specificity RNA methyltransferase RlmN from Escherichia coli O6:H1 (strain CFT073 / ATCC 700928 / UPEC).